A 401-amino-acid chain; its full sequence is Probable tRNA sulfurtransferase (401 aa).

Positions E60 to D165 constitute a THUMP domain. Residues M183 to L184, H208 to F209, R265, G287, and Q296 each bind ATP.

Belongs to the ThiI family.

Its subcellular location is the cytoplasm. The enzyme catalyses [ThiI sulfur-carrier protein]-S-sulfanyl-L-cysteine + a uridine in tRNA + 2 reduced [2Fe-2S]-[ferredoxin] + ATP + H(+) = [ThiI sulfur-carrier protein]-L-cysteine + a 4-thiouridine in tRNA + 2 oxidized [2Fe-2S]-[ferredoxin] + AMP + diphosphate. It carries out the reaction [ThiS sulfur-carrier protein]-C-terminal Gly-Gly-AMP + S-sulfanyl-L-cysteinyl-[cysteine desulfurase] + AH2 = [ThiS sulfur-carrier protein]-C-terminal-Gly-aminoethanethioate + L-cysteinyl-[cysteine desulfurase] + A + AMP + 2 H(+). Its pathway is cofactor biosynthesis; thiamine diphosphate biosynthesis. Functionally, catalyzes the ATP-dependent transfer of a sulfur to tRNA to produce 4-thiouridine in position 8 of tRNAs, which functions as a near-UV photosensor. Also catalyzes the transfer of sulfur to the sulfur carrier protein ThiS, forming ThiS-thiocarboxylate. This is a step in the synthesis of thiazole, in the thiamine biosynthesis pathway. The sulfur is donated as persulfide by IscS. This Geobacillus thermodenitrificans (strain NG80-2) protein is Probable tRNA sulfurtransferase.